A 940-amino-acid polypeptide reads, in one-letter code: Isoleucine--tRNA ligase (940 aa).

The short motif at 58–68 (PYANGSIHIGH) is the 'HIGH' region element. An L-isoleucyl-5'-AMP-binding site is contributed by Glu-564. A 'KMSKS' region motif is present at residues 605-609 (KMSKS). Lys-608 provides a ligand contact to ATP. Zn(2+) is bound by residues Cys-903, Cys-906, Cys-923, and Cys-926.

Belongs to the class-I aminoacyl-tRNA synthetase family. IleS type 1 subfamily. As to quaternary structure, monomer. Requires Zn(2+) as cofactor.

It is found in the cytoplasm. The catalysed reaction is tRNA(Ile) + L-isoleucine + ATP = L-isoleucyl-tRNA(Ile) + AMP + diphosphate. In terms of biological role, catalyzes the attachment of isoleucine to tRNA(Ile). As IleRS can inadvertently accommodate and process structurally similar amino acids such as valine, to avoid such errors it has two additional distinct tRNA(Ile)-dependent editing activities. One activity is designated as 'pretransfer' editing and involves the hydrolysis of activated Val-AMP. The other activity is designated 'posttransfer' editing and involves deacylation of mischarged Val-tRNA(Ile). The sequence is that of Isoleucine--tRNA ligase from Shewanella oneidensis (strain ATCC 700550 / JCM 31522 / CIP 106686 / LMG 19005 / NCIMB 14063 / MR-1).